The following is a 305-amino-acid chain: MIGGDFAVVKAKKSLERRGFGVKRGDKIYLHPLEVVYLQIKGIESFGELEDVLSWAESRMEDFSTYYFVYEDLRDRGNKVKIQGEFLLTKKPYLPISERKTIRMEEIAEKARNFDELRLAVVDEESEITYFRVYEPDMMGEQKEELPEIAGILSDEYVITKQTEIFSRYFYGSEKGDLVTLSLIESLYLLDLGKLNLLNADREELVKRAREVERNFDRRYEVYRNLKERGFVVKTGFKFGSEFRVYRKVESVDDLPHSEYLVDIADSREIRLIDLARAVRLAQNVRKRMVFAYGKNYLCFERVKV.

Active-site residues include Y246, H257, and K287.

It belongs to the tRNA-intron endonuclease family. Archaeal long subfamily. Homodimer.

The catalysed reaction is pretRNA = a 3'-half-tRNA molecule with a 5'-OH end + a 5'-half-tRNA molecule with a 2',3'-cyclic phosphate end + an intron with a 2',3'-cyclic phosphate and a 5'-hydroxyl terminus.. Its function is as follows. Endonuclease that removes tRNA introns. Cleaves pre-tRNA at the 5'- and 3'-splice sites to release the intron. The products are an intron and two tRNA half-molecules bearing 2',3' cyclic phosphate and 5'-OH termini. Recognizes a pseudosymmetric substrate in which 2 bulged loops of 3 bases are separated by a stem of 4 bp. The sequence is that of tRNA-splicing endonuclease from Archaeoglobus fulgidus (strain ATCC 49558 / DSM 4304 / JCM 9628 / NBRC 100126 / VC-16).